The chain runs to 226 residues: ATP synthase subunit a 1 (226 aa).

The next 5 helical transmembrane spans lie at 20-40, 78-98, 113-133, 174-194, and 196-216; these read LTIVTTWAVMLLLAGGSWLIT, YLPFIATLFLFIATANLCTVI, ALALSVFIAVPLFGIAESGLV, MILVILLTISPLVFPVLMNIL, and LLTGMVQAYIFSILATVYIAA.

This sequence belongs to the ATPase A chain family. In terms of assembly, F-type ATPases have 2 components, CF(1) - the catalytic core - and CF(0) - the membrane proton channel. CF(1) has five subunits: alpha(3), beta(3), gamma(1), delta(1), epsilon(1). CF(0) has four main subunits: a, b, b' and c.

It is found in the cell inner membrane. Key component of the proton channel; it plays a direct role in the translocation of protons across the membrane. In Chlorobaculum parvum (strain DSM 263 / NCIMB 8327) (Chlorobium vibrioforme subsp. thiosulfatophilum), this protein is ATP synthase subunit a 1.